The following is a 528-amino-acid chain: Abrin-d (528 aa).

The residue at position 1 (Gln1) is a Pyrrolidone carboxylic acid. Glu164 is an active-site residue. The N-linked (GlcNAc...) asparagine glycan is linked to Asn200. Intrachain disulfides connect Cys247-Cys269, Cys286-Cys305, and Cys329-Cys346. The 128-residue stretch at Tyr273 to Gly400 folds into the Ricin B-type lectin 1 domain. The stretch at Asp283–Ser325 is one 1-alpha repeat. A 1-beta repeat occupies Asn326 to Asn366. Asn361 and Asn401 each carry an N-linked (GlcNAc...) asparagine glycan. Residues Ser369–Asn401 form a 1-gamma repeat. The Ricin B-type lectin 2 domain occupies Thr403–Leu527. One copy of the 2-alpha repeat lies at Ser414–Ser449. 2 cysteine pairs are disulfide-bonded: Cys417–Cys430 and Cys456–Cys473. A 2-beta repeat occupies Thr453 to Ser492. The stretch at Asp495–Phe528 is one 2-gamma repeat.

The protein in the N-terminal section; belongs to the ribosome-inactivating protein family. Type 2 RIP subfamily. Disulfide-linked dimer of A and B chains.

The catalysed reaction is Endohydrolysis of the N-glycosidic bond at one specific adenosine on the 28S rRNA.. Functionally, the A chain is responsible for inhibiting protein synthesis through the catalytic inactivation of 60S ribosomal subunits by removing adenine from position 4,324 of 28S rRNA. Its function is as follows. The B chain is a galactose-specific lectin that facilitates the binding of abrin to the cell membrane that precedes endocytosis. This is Abrin-d from Abrus precatorius (Indian licorice).